Here is a 130-residue protein sequence, read N- to C-terminus: Calcium-binding protein KRP1 (130 aa).

The region spanning 72-107 (LTDEDVRCMIKEGDFDCDGALNQMEFCVLMFRLSPD) is the EF-hand domain. Positions 85, 87, 89, and 96 each coordinate Ca(2+).

In terms of biological role, potential calcium sensor that binds calcium in vitro. This is Calcium-binding protein KRP1 from Arabidopsis thaliana (Mouse-ear cress).